We begin with the raw amino-acid sequence, 168 residues long: Plastocyanin, chloroplastic (168 aa).

A chloroplast-targeting transit peptide spans M1–N70. In terms of domain architecture, Plastocyanin-like spans A71 to S168. The Cu cation site is built by H108, C153, H156, and M161.

This sequence belongs to the plastocyanin family. Requires Cu(2+) as cofactor.

It localises to the plastid. It is found in the chloroplast thylakoid membrane. Participates in electron transfer between P700 and the cytochrome b6-f complex in photosystem I. This Physcomitrium patens (Spreading-leaved earth moss) protein is Plastocyanin, chloroplastic (PETE).